The primary structure comprises 351 residues: Dihydroorotate dehydrogenase (quinone) (351 aa).

Residues 67 to 71 and T91 each bind FMN; that span reads AGFDK. K71 provides a ligand contact to substrate. 116–120 contributes to the substrate binding site; that stretch reads NAMGF. FMN-binding residues include N145 and N178. A substrate-binding site is contributed by N178. S181 serves as the catalytic Nucleophile. Residue N183 coordinates substrate. The FMN site is built by K214 and T242. Substrate is bound at residue 243–244; sequence NT. FMN is bound by residues G262, G291, and 312 to 313; that span reads YS.

It belongs to the dihydroorotate dehydrogenase family. Type 2 subfamily. As to quaternary structure, monomer. It depends on FMN as a cofactor.

The protein resides in the cell membrane. The catalysed reaction is (S)-dihydroorotate + a quinone = orotate + a quinol. Its pathway is pyrimidine metabolism; UMP biosynthesis via de novo pathway; orotate from (S)-dihydroorotate (quinone route): step 1/1. Its function is as follows. Catalyzes the conversion of dihydroorotate to orotate with quinone as electron acceptor. The polypeptide is Dihydroorotate dehydrogenase (quinone) (Helicobacter pylori (strain P12)).